The sequence spans 211 residues: Calcipressin-like protein (211 aa).

Residues serine 113 and serine 117 each carry the phosphoserine modification. Residue threonine 182 is modified to Phosphothreonine.

The protein belongs to the RCAN family.

Functionally, inhibits calcineurin-dependent transcriptional responses by binding to the catalytic domain of calcineurin. This chain is Calcipressin-like protein (RCN1), found in Saccharomyces cerevisiae (strain ATCC 204508 / S288c) (Baker's yeast).